The chain runs to 393 residues: Probable acetyl-CoA acetyltransferase (393 aa).

Catalysis depends on Cys-88, which acts as the Acyl-thioester intermediate. Catalysis depends on proton acceptor residues His-348 and Cys-378.

The protein belongs to the thiolase-like superfamily. Thiolase family.

The protein localises to the cytoplasm. It catalyses the reaction 2 acetyl-CoA = acetoacetyl-CoA + CoA. This is Probable acetyl-CoA acetyltransferase (yqeF) from Escherichia coli (strain K12).